Reading from the N-terminus, the 424-residue chain is Hemagglutinin-esterase (424 aa).

Signal peptides lie at residues 1–16 (MFLLLRFVLVSCIIGS) and 1–18 (MFLLLRFVLVSCIIGSLG). The tract at residues 7 to 127 (FVLVSCIIGS…SNDIWMQNKG (121 aa)) is esterase domain 1. The Virion surface segment spans residues 17–392 (LGFDNPPTNV…PICVYDPLPL (376 aa)). S40 serves as the catalytic Nucleophile. The cysteines at positions 44 and 65 are disulfide-linked. N-linked (GlcNAc...) asparagine; by host glycans are attached at residues N54, N89, N153, N236, and N301. Intrachain disulfides connect C113–C162, C197–C276, and C205–C249. Positions 128–266 (LFYTQVYKNM…GNYLAISNEL (139 aa)) are receptor binding. The esterase domain 2 stretch occupies residues 267-379 (LLTVPTKAIC…RCPTAADINT (113 aa)). C307 and C312 are disulfide-bonded. The N-linked (GlcNAc...) asparagine; by host glycan is linked to N316. Catalysis depends on charge relay system residues D326 and H329. An intrachain disulfide couples C347 to C371. A glycan (N-linked (GlcNAc...) asparagine; by host) is linked at N358. Residues 393-413 (ILLGILLGVAVIIIVVLLLYF) traverse the membrane as a helical segment. Topologically, residues 414 to 424 (MVDNGTRLHDA) are intravirion. N-linked (GlcNAc...) asparagine; by host glycosylation occurs at N417.

This sequence belongs to the influenza type C/coronaviruses hemagglutinin-esterase family. Homodimer; disulfide-linked. Forms a complex with the M protein in the pre-Golgi. Associates then with S-M complex to form a ternary complex S-M-HE. Post-translationally, N-glycosylated in the host RER.

The protein localises to the virion membrane. It is found in the host cell membrane. The catalysed reaction is N-acetyl-9-O-acetylneuraminate + H2O = N-acetylneuraminate + acetate + H(+). It carries out the reaction N-acetyl-4-O-acetylneuraminate + H2O = N-acetylneuraminate + acetate + H(+). Its function is as follows. Structural protein that makes short spikes at the surface of the virus. Contains receptor binding and receptor-destroying activities. Mediates de-O-acetylation of N-acetyl-4-O-acetylneuraminic acid, which is probably the receptor determinant recognized by the virus on the surface of erythrocytes and susceptible cells. This receptor-destroying activity is important for virus release as it probably helps preventing self-aggregation and ensures the efficient spread of the progeny virus from cell to cell. May serve as a secondary viral attachment protein for initiating infection, the spike protein being the major one. May become a target for both the humoral and the cellular branches of the immune system. This chain is Hemagglutinin-esterase, found in Bos taurus (Bovine).